The chain runs to 1139 residues: Protein lin-25 (1139 aa).

Positions 695–701 match the Nuclear localization signal motif; it reads IKKKKDP.

As to expression, expressed in seam cells and all six vulva precursor cells (VPC). After VPC division, expression is restricted to descendants of the VPC cell lineages P5.p, P6.p and P7.p (at protein level).

It is found in the nucleus. The protein resides in the cytoplasm. Participates in the inductive signaling pathway downstream of let-60 Ras and the RAF/MAP kinase cascade to regulate specification and differentiation of many cell types. Positively regulates the fate of vulval precursor cells. Required for induction of the P12 and excretory duct cell fates. In males, it is also required for proper formation of spicules. Does not function in the signaling pathway that promotes exit from pachytene. Plays a role in responses to M.nematophilum-mediated bacterial infection by promoting tail swelling and preventing constipation. In Caenorhabditis elegans, this protein is Protein lin-25 (lin-25).